The chain runs to 621 residues: Pre-mRNA-processing protein 45 (621 aa).

5 disordered regions span residues Met1–Gly73, Ser137–Glu164, Ala220–Pro251, Arg347–Met438, and Gly542–Ser621. Low complexity predominate over residues Pro36–Pro51. 2 stretches are compositionally biased toward basic and acidic residues: residues Thr140–Glu164 and Ala220–Arg229. Over residues Pro239–Arg248 the composition is skewed to pro residues. Residues Gly364–Pro380 are compositionally biased toward basic and acidic residues. The span at Asp403–Gly417 shows a compositional bias: acidic residues. 2 stretches are compositionally biased toward basic and acidic residues: residues Ala418–Arg437 and Glu594–Ser621.

The protein belongs to the SNW family. Associated with the spliceosome.

It localises to the nucleus. Its function is as follows. Involved in pre-mRNA splicing. In Mycosarcoma maydis (Corn smut fungus), this protein is Pre-mRNA-processing protein 45 (PRP45).